We begin with the raw amino-acid sequence, 296 residues long: Ribosomal RNA small subunit methyltransferase H (296 aa).

S-adenosyl-L-methionine is bound by residues 38 to 40 (GVH), glutamate 57, phenylalanine 88, aspartate 103, and histidine 110.

It belongs to the methyltransferase superfamily. RsmH family.

The protein resides in the cytoplasm. It carries out the reaction cytidine(1402) in 16S rRNA + S-adenosyl-L-methionine = N(4)-methylcytidine(1402) in 16S rRNA + S-adenosyl-L-homocysteine + H(+). Its function is as follows. Specifically methylates the N4 position of cytidine in position 1402 (C1402) of 16S rRNA. The chain is Ribosomal RNA small subunit methyltransferase H from Borreliella burgdorferi (strain ZS7) (Borrelia burgdorferi).